The chain runs to 585 residues: PiggyBac transposable element-derived protein 4 (585 aa).

Residues 1–73 (MSNPRKRSIP…STSSDSGRSM (73 aa)) form a disordered region. Residues 25–40 (DSFDESDFSEIDDSDN) show a composition bias toward acidic residues. Over residues 47–61 (EADKIRPLSHLESDG) the composition is skewed to basic and acidic residues. Over residues 62-72 (KSSTSSDSGRS) the composition is skewed to low complexity.

This Homo sapiens (Human) protein is PiggyBac transposable element-derived protein 4 (PGBD4).